Here is an 85-residue protein sequence, read N- to C-terminus: Large ribosomal subunit protein bL27 (85 aa).

A disordered region spans residues 1–20; sequence MATKKAGGSTRNGRDSEAKR.

The protein belongs to the bacterial ribosomal protein bL27 family.

The protein is Large ribosomal subunit protein bL27 of Pasteurella multocida (strain Pm70).